The chain runs to 209 residues: High frequency lysogenization protein HflD homolog (209 aa).

Residues 79 to 121 (QGLNAELTRYTLSLMVLERKLNSAKGAMDTLGDRIAGLQRQLD) are a coiled coil.

Belongs to the HflD family.

The protein resides in the cytoplasm. The protein localises to the cell inner membrane. The protein is High frequency lysogenization protein HflD homolog of Enterobacter sp. (strain 638).